The chain runs to 475 residues: Ribulose bisphosphate carboxylase large chain (475 aa).

A propeptide spanning residues 1–2 (MS) is cleaved from the precursor. At Pro3 the chain carries N-acetylproline. Lys14 bears the N6,N6,N6-trimethyllysine mark. The substrate site is built by Asn123 and Thr173. Lys175 functions as the Proton acceptor in the catalytic mechanism. A substrate-binding site is contributed by Lys177. Positions 201, 203, and 204 each coordinate Mg(2+). An N6-carboxylysine modification is found at Lys201. His294 functions as the Proton acceptor in the catalytic mechanism. 3 residues coordinate substrate: Arg295, His327, and Ser379.

The protein belongs to the RuBisCO large chain family. Type I subfamily. As to quaternary structure, heterohexadecamer of 8 large chains and 8 small chains; disulfide-linked. The disulfide link is formed within the large subunit homodimers. Mg(2+) is required as a cofactor. In terms of processing, the disulfide bond which can form in the large chain dimeric partners within the hexadecamer appears to be associated with oxidative stress and protein turnover.

The protein localises to the plastid. Its subcellular location is the chloroplast. The enzyme catalyses 2 (2R)-3-phosphoglycerate + 2 H(+) = D-ribulose 1,5-bisphosphate + CO2 + H2O. It catalyses the reaction D-ribulose 1,5-bisphosphate + O2 = 2-phosphoglycolate + (2R)-3-phosphoglycerate + 2 H(+). In terms of biological role, ruBisCO catalyzes two reactions: the carboxylation of D-ribulose 1,5-bisphosphate, the primary event in carbon dioxide fixation, as well as the oxidative fragmentation of the pentose substrate in the photorespiration process. Both reactions occur simultaneously and in competition at the same active site. This is Ribulose bisphosphate carboxylase large chain from Illicium oligandrum (Star anise).